The primary structure comprises 155 residues: Small ribosomal subunit protein uS7cz/uS7cy (155 aa).

Belongs to the universal ribosomal protein uS7 family. Part of the 30S ribosomal subunit.

Its subcellular location is the plastid. The protein resides in the chloroplast. Functionally, one of the primary rRNA binding proteins, it binds directly to 16S rRNA where it nucleates assembly of the head domain of the 30S subunit. This Phalaenopsis aphrodite subsp. formosana (Moth orchid) protein is Small ribosomal subunit protein uS7cz/uS7cy (rps7-A).